A 1482-amino-acid chain; its full sequence is Pregnancy zone protein (1482 aa).

A signal peptide spans M1–S25. Residues N54, N69, N246, N392, and N406 are each glycosylated (N-linked (GlcNAc...) asparagine). Residues C685–E735 form a bait region region. N-linked (GlcNAc...) asparagine glycans are attached at residues N753, N875, and N932. The segment at residues C978 to Q981 is a cross-link (isoglutamyl cysteine thioester (Cys-Gln)). Residues N997 and N1430 are each glycosylated (N-linked (GlcNAc...) asparagine).

This sequence belongs to the protease inhibitor I39 (alpha-2-macroglobulin) family. As to quaternary structure, homotetramer, which consists of two pairs of disulfide-linked chains. In terms of tissue distribution, plasma. Prominent constituent of late-pregnancy sera.

Its subcellular location is the secreted. In terms of biological role, is able to inhibit all four classes of proteinases by a unique 'trapping' mechanism. This protein has a peptide stretch, called the 'bait region' which contains specific cleavage sites for different proteinases. When a proteinase cleaves the bait region, a conformational change is induced in the protein which traps the proteinase. The entrapped enzyme remains active against low molecular weight substrates (activity against high molecular weight substrates is greatly reduced). Following cleavage in the bait region a thioester bond is hydrolyzed and mediates the covalent binding of the protein to the proteinase. The polypeptide is Pregnancy zone protein (PZP) (Homo sapiens (Human)).